A 292-amino-acid chain; its full sequence is MTEFDLSTREGRWKHFGSVDPIEGTKPTTKNEMTDLQSTHKDFLFEIEEVGIKNLVYPVLVDQYQTAGTFSFSTSLTKDEKGINMSRIIESVEKHYDNGIELEFNTLYQVLCTLQTNMKQNAAGVDVSGKWFFDRYSPTTNIKAVGNADVTYGLAIDGDKVTRKELTIEATVTTLCPCSKEISEYSAHNQRGVVTVKTYINKDQDIVDDYKNKILDAMEANASSILYPILKRPDEKRVTERAYENPRFVEDLIRLIAADLVEFDWLEGFDIECRNEESIHQHDAFAKLKYRK.

Belongs to the GTP cyclohydrolase IV family.

It carries out the reaction GTP + H2O = 7,8-dihydroneopterin 3'-triphosphate + formate + H(+). The protein operates within cofactor biosynthesis; 7,8-dihydroneopterin triphosphate biosynthesis; 7,8-dihydroneopterin triphosphate from GTP: step 1/1. Converts GTP to 7,8-dihydroneopterin triphosphate. The sequence is that of GTP cyclohydrolase FolE2 from Staphylococcus aureus (strain MRSA252).